An 86-amino-acid chain; its full sequence is High affinity immunoglobulin epsilon receptor subunit gamma (86 aa).

The first 18 residues, 1–18 (MYPAVVLLLLLLVEQAAA), serve as a signal peptide directing secretion. Over 19–23 (LGEPQ) the chain is Extracellular. Residues 24 to 44 (LCYILDAILFLYGIILTLLYC) form a helical membrane-spanning segment. The Cytoplasmic portion of the chain corresponds to 45–86 (RLKIQVRKATVASYEKPDGIYTGLSTRNQETYETLKHEKPPQ). Residues 54 to 82 (TVASYEKPDGIYTGLSTRNQETYETLKHE) form the ITAM domain. Tyrosine 65 bears the Phosphotyrosine mark. Serine 69 is subject to Phosphoserine. Tyrosine 76 carries the phosphotyrosine modification. Threonine 78 is modified (phosphothreonine).

This sequence belongs to the CD3Z/FCER1G family. In terms of assembly, igE Fc receptor is a tetramer of an alpha chain, a beta chain, and two disulfide linked gamma chains. Associates with FCGR1A; forms a functional signaling complex. The signaling subunit of immunoglobulin gamma (IgG) Fc receptor complex. As a homodimer or a heterodimer of CD247 and FCER1G, associates with the ligand binding subunit FCGR3A to form a functional receptor complex. Associates with CLEC6A. Interacts with CLEC4E. Interacts (via ITAM domain) with SYK (via SH2 domains); activates SYK, enabling integrin-mediated activation of neutrophils and macrophages. Interacts with CSF2RB and recruits SYK in response to IL3 stimulation; this interaction is direct. Interacts with CD300LH; the interaction may be indirect. Interacts with CD300LD. Interacts with TARM1.

It is found in the cell membrane. Its function is as follows. Adapter protein containing an immunoreceptor tyrosine-based activation motif (ITAM) that transduces activation signals from various immunoreceptors. As a component of the high-affinity immunoglobulin E (IgE) receptor, mediates allergic inflammatory signaling in mast cells. As a constitutive component of interleukin-3 receptor complex, selectively mediates interleukin 4/IL4 production by basophils priming T-cells toward effector T-helper 2 subset. Associates with pattern recognition receptors CLEC4D and CLEC4E to form a functional signaling complex in myeloid cells. Binding of mycobacterial trehalose 6,6'-dimycolate (TDM) to this receptor complex leads to phosphorylation of ITAM, triggering activation of SYK, CARD9 and NF-kappa-B, consequently driving maturation of antigen-presenting cells and shaping antigen-specific priming of T-cells toward effector T-helper 1 and T-helper 17 cell subtypes. May function cooperatively with other activating receptors. Functionally linked to integrin beta-2/ITGB2-mediated neutrophil activation. Also involved in integrin alpha-2/ITGA2-mediated platelet activation. The protein is High affinity immunoglobulin epsilon receptor subunit gamma (FCER1G) of Cavia porcellus (Guinea pig).